Consider the following 361-residue polypeptide: Phosphoserine aminotransferase (361 aa).

Arginine 42 contacts L-glutamate. Residues alanine 76–arginine 77, tryptophan 102, threonine 153, aspartate 173, and glutamine 196 each bind pyridoxal 5'-phosphate. Lysine 197 bears the N6-(pyridoxal phosphate)lysine mark. Asparagine 238–threonine 239 is a pyridoxal 5'-phosphate binding site.

It belongs to the class-V pyridoxal-phosphate-dependent aminotransferase family. SerC subfamily. As to quaternary structure, homodimer. It depends on pyridoxal 5'-phosphate as a cofactor.

The protein resides in the cytoplasm. It carries out the reaction O-phospho-L-serine + 2-oxoglutarate = 3-phosphooxypyruvate + L-glutamate. It catalyses the reaction 4-(phosphooxy)-L-threonine + 2-oxoglutarate = (R)-3-hydroxy-2-oxo-4-phosphooxybutanoate + L-glutamate. It functions in the pathway amino-acid biosynthesis; L-serine biosynthesis; L-serine from 3-phospho-D-glycerate: step 2/3. Its pathway is cofactor biosynthesis; pyridoxine 5'-phosphate biosynthesis; pyridoxine 5'-phosphate from D-erythrose 4-phosphate: step 3/5. Its function is as follows. Catalyzes the reversible conversion of 3-phosphohydroxypyruvate to phosphoserine and of 3-hydroxy-2-oxo-4-phosphonooxybutanoate to phosphohydroxythreonine. This Mannheimia succiniciproducens (strain KCTC 0769BP / MBEL55E) protein is Phosphoserine aminotransferase.